Consider the following 409-residue polypeptide: Nucleoprotein (409 aa).

4 disordered regions span residues 1-31, 44-84, 164-196, and 238-258; these read MASGKAAGKTDAPTPVIKLGGPKPPKVGSSG, LNSP…KGGR, RSGRSTAASSAASSRAPSREVSRGRRSGSEDDL, and VDQVFGPRTKGKEGNFGDDKM. Over residues 15–31 the composition is skewed to low complexity; the sequence is PVIKLGGPKPPKVGSSG. Residues 29–160 form an RNA-binding region; the sequence is SSGNVSWFQA…GNFRWDFIPL (132 aa). A CoV N NTD domain is found at 31–156; that stretch reads GNVSWFQAIK…GGPDGNFRWD (126 aa). The segment covering 70–84 has biased composition (basic residues); sequence YWRRQARFKPGKGGR. Residues 166-179 are compositionally biased toward low complexity; that stretch reads GRSTAASSAASSRA. 2 stretches are compositionally biased toward basic and acidic residues: residues 180–192 and 247–258; these read PSREVSRGRRSGS and KGKEGNFGDDKM. 2 positions are modified to phosphoserine; by host: Ser190 and Ser192. The region spanning 215-331 is the CoV N CTD domain; sequence TKAKADEMAH…QCVDGVGTRP (117 aa). The tract at residues 226 to 333 is dimerization; it reads RYCKRTIPPN…VDGVGTRPKD (108 aa). A disulfide bridge connects residues Cys320 and Cys323. The tract at residues 326-409 is disordered; it reads GVGTRPKDDE…GDSALGENEL (84 aa). Over residues 358–367 the composition is skewed to basic residues; sequence QRPKKEKKPK. Basic and acidic residues predominate over residues 368 to 384; that stretch reads KQDDEVDKALTSDEERN. Thr378 bears the Phosphothreonine; by host mark. Residue Ser379 is modified to Phosphoserine; by host.

It belongs to the gammacoronavirus nucleocapsid protein family. Homooligomer. Both monomeric and oligomeric forms interact with RNA. Interacts with protein M. Interacts with NSP3; this interaction serves to tether the genome to the newly translated replicase-transcriptase complex at a very early stage of infection. ADP-ribosylated. The ADP-ribosylation is retained in the virion during infection. In terms of processing, phosphorylated on serine and threonine residues.

The protein resides in the virion. It is found in the host endoplasmic reticulum-Golgi intermediate compartment. Its subcellular location is the host Golgi apparatus. Functionally, packages the positive strand viral genome RNA into a helical ribonucleocapsid (RNP) and plays a fundamental role during virion assembly through its interactions with the viral genome and membrane protein M. Plays an important role in enhancing the efficiency of subgenomic viral RNA transcription as well as viral replication. The protein is Nucleoprotein of Gallus gallus (Chicken).